We begin with the raw amino-acid sequence, 260 residues long: Proteasome subunit alpha (260 aa).

Positions 231–260 (LLPEDFSPGQTEGGGDPAPESGDSKDAKDN) are disordered.

This sequence belongs to the peptidase T1A family. In terms of assembly, the 20S proteasome core is composed of 14 alpha and 14 beta subunits that assemble into four stacked heptameric rings, resulting in a barrel-shaped structure. The two inner rings, each composed of seven catalytic beta subunits, are sandwiched by two outer rings, each composed of seven alpha subunits. The catalytic chamber with the active sites is on the inside of the barrel. Has a gated structure, the ends of the cylinder being occluded by the N-termini of the alpha-subunits. Is capped by the proteasome-associated ATPase, ARC.

The protein resides in the cytoplasm. It participates in protein degradation; proteasomal Pup-dependent pathway. The formation of the proteasomal ATPase ARC-20S proteasome complex, likely via the docking of the C-termini of ARC into the intersubunit pockets in the alpha-rings, may trigger opening of the gate for substrate entry. Interconversion between the open-gate and close-gate conformations leads to a dynamic regulation of the 20S proteasome proteolysis activity. Functionally, component of the proteasome core, a large protease complex with broad specificity involved in protein degradation. This is Proteasome subunit alpha from Mycobacteroides abscessus (strain ATCC 19977 / DSM 44196 / CCUG 20993 / CIP 104536 / JCM 13569 / NCTC 13031 / TMC 1543 / L948) (Mycobacterium abscessus).